We begin with the raw amino-acid sequence, 1366 residues long: MLSFVDTRTLLLLAVTSCLATCQSLQEATARKGPTGDRGPRGERGPPGPPGRDGDDGIPGPPGPPGPPGPPGLGGNFAAQYDGKGVGLGPGPMGLMGPRGPPGASGAPGPQGFQGPAGEPGEPGQTGPAGARGPPGPPGKAGEDGHPGKPGRPGERGVVGPQGARGFPGTPGLPGFKGIRGHNGLDGLKGQPGAPGVKGEPGAPGENGTPGQTGARGLPGERGRVGAPGPAGARGSDGSVGPVGPAGPIGSAGPPGFPGAPGPKGEIGPVGNPGPAGPAGPRGEVGLPGVSGPVGPPGNPGANGLTGAKGAAGLPGVAGAPGLPGPRGIPGPVGAAGATGARGIVGEPGPAGSKGESGNKGEPGSAGAQGPPGPSGEEGKRGPNGEAGSAGPSGPPGLRGSPGSRGLPGADGPAGVMGPPGPRGATGPAGVRGPNGDSGRPGEPGLMGPRGFPGAPGNVGPAGKEGPMGLPGIDGRPGPIGPAGARGEPGNIGFPGPKGPTGDPGKNGDKGHAGLAGARGAPGPDGNNGAQGPPGPQGVQGGKGEQGPAGPPGFQGLPGPAGTAGEVGKPGERGLPGEFGLPGPAGPRGERGPPGESGAAGPSGPIGSRGPSGPPGPDGNKGEPGVLGAPGTAGASGPGGLPGERGAAGIPGGKGEKGETGLRGEIGNPGRDGARGAPGAMGAPGPAGATGDRGEAGPAGPAGPAGPRGTPGERGEVGPAGPNGFAGPAGAAGQPGAKGERGTKGPKGENGPVGPTGPIGSAGPSGPNGPPGPAGSRGDGGPPGATGFPGAAGRTGPPGPSGITGPPGPPGAAGKEGLRGPRGDQGPVGRTGETGASGPPGFTGEKGPSGEPGTAGPPGTPGPQGLLGAPGILGLPGSRGERGLPGVAGSVGEPGPLGIAGPPGARGPPGAVGAPGVNGAPGEAGRDGNPGNDGPPGRDGQAGHKGERGYPGNIGPVGAVGAPGPHGPVGPTGKHGNRGEPGPAGSVGPVGAVGPRGPSGPQGIRGDKGEPGEKGPRGLPGLKGHNGLQGLPGLAGQHGDQGAPGSVGPAGPRGPAGPSGPAGKDGRTGQPGTVGPAGIRGSQGSQGPAGPPGPPGPPGPPGPSGGGYDFGYEGDFYRADQPRSPPSLRPKDYEVDATLKSLNNQIETLLTPEGSRKNPARTCRDLRLSHPEWSSGYYWIDPNQGCTMDAIKVYCDFSTGETCIRAQPENIPAKNWYRNSKVKKHIWLGETINGGTQFEYNVEGVTTKEMATQLAFMRLLANHASQNITYHCKNSIAYMDEETGNLKKAVILQGSNDVELVAEGNSRFTYTVLVDGCSKKTNEWRKTIIEYKTNKPSRLPILDIAPLDIGDADQEFRVDVGPVCFK.

Residues 1-22 (MLSFVDTRTLLLLAVTSCLATC) form the signal peptide. Q23 is subject to Pyrrolidone carboxylic acid. Residues 23–79 (QSLQEATARKGPTGDRGPRGERGPPGPPGRDGDDGIPGPPGPPGPPGPPGLGGNFAA) constitute a propeptide, N-terminal propeptide. The segment at 27–1131 (EATARKGPTG…PRSPPSLRPK (1105 aa)) is disordered. The segment covering 34–44 (PTGDRGPRGER) has biased composition (basic and acidic residues). Residues 59 to 71 (PGPPGPPGPPGPP) show a composition bias toward pro residues. Allysine is present on K84. Positions 84–94 (KGVGLGPGPMG) are enriched in gly residues. The segment covering 95-132 (LMGPRGPPGASGAPGPQGFQGPAGEPGEPGQTGPAGAR) has biased composition (low complexity). Basic and acidic residues predominate over residues 141-155 (AGEDGHPGKPGRPGE). Position 177 is a 5-hydroxylysine; alternate (K177). O-linked (Gal...) hydroxylysine; alternate glycosylation occurs at K177. Composition is skewed to low complexity over residues 225-254 (VGAPGPAGARGSDGSVGPVGPAGPIGSAGP), 279-293 (AGPRGEVGLPGVSGP), 300-321 (PGANGLTGAKGAAGLPGVAGAP), 330-345 (PGPVGAAGATGARGIV), 384-408 (NGEAGSAGPSGPPGLRGSPGSRGLP), 423-434 (RGATGPAGVRGP), 470-489 (LPGIDGRPGPIGPAGARGEP), and 513-531 (AGLAGARGAPGPDGNNGAQ). A compositionally biased stretch (gly residues) spans 538–547 (GVQGGKGEQG). Residues 594–611 (PGESGAAGPSGPIGSRGP) show a composition bias toward low complexity. Over residues 634–643 (GASGPGGLPG) the composition is skewed to gly residues. 2 stretches are compositionally biased toward low complexity: residues 668–690 (NPGRDGARGAPGAMGAPGPAGAT) and 717–737 (VGPAGPNGFAGPAGAAGQPGA). Residues 738-747 (KGERGTKGPK) show a composition bias toward basic and acidic residues. Over residues 756–765 (TGPIGSAGPS) the composition is skewed to low complexity. Positions 775–784 (GSRGDGGPPG) are enriched in gly residues. Low complexity-rich tracts occupy residues 785–795 (ATGFPGAAGRT), 863–876 (PQGLLGAPGILGLP), 893–932 (EPGPLGIAGPPGARGPPGAVGAPGVNGAPGEAGRDGNPGN), 951–974 (PGNIGPVGAVGAPGPHGPVGPTGK), and 981–1001 (PGPAGSVGPVGAVGPRGPSGP). Over residues 1005–1016 (RGDKGEPGEKGP) the composition is skewed to basic and acidic residues. A compositionally biased stretch (pro residues) spans 1089-1103 (AGPPGPPGPPGPPGP). A propeptide spans 1120 to 1366 (DQPRSPPSLR…RVDVGPVCFK (247 aa)) (C-terminal propeptide). In terms of domain architecture, Fibrillar collagen NC1 spans 1133–1366 (YEVDATLKSL…RVDVGPVCFK (234 aa)). Disulfide bonds link C1163/C1195, C1203/C1364, and C1272/C1317. Positions 1181, 1183, 1184, 1186, and 1189 each coordinate Ca(2+).

This sequence belongs to the fibrillar collagen family. In terms of assembly, trimers of one alpha 2(I) and two alpha 1(I) chains. Interacts (via C-terminus) with TMEM131 (via PapD-L domain); the interaction is direct and is involved in assembly and TRAPPIII ER-to-Golgi transport complex-dependent secretion of collagen. In terms of processing, prolines at the third position of the tripeptide repeating unit (G-X-Y) are hydroxylated in some or all of the chains. As to expression, forms the fibrils of tendon, ligaments and bones. In bones the fibrils are mineralized with calcium hydroxyapatite.

The protein resides in the secreted. The protein localises to the extracellular space. Its subcellular location is the extracellular matrix. Type I collagen is a member of group I collagen (fibrillar forming collagen). This Canis lupus familiaris (Dog) protein is Collagen alpha-2(I) chain (COL1A2).